Consider the following 517-residue polypeptide: Carotenoid phi-ring synthase (517 aa).

The disordered stretch occupies residues 1–24; the sequence is MFARDSGRGHRHGRDRQAAVVPAP. FAD contacts are provided by residues Ala-45, 64–65, Arg-72, Tyr-99, Asp-461, and Met-472; that span reads ER.

This sequence belongs to the carotenoid/retinoid oxidoreductase family. FAD serves as cofactor.

The enzyme catalyses a carotenoid beta-end derivative + 2 A = a carotenoid phi-end derivative + 2 AH2. It participates in carotenoid biosynthesis. Involved in the biosynthesis of isorenieratene, a carotenoid with aromatic end groups. Catalyzes the introduction of two additional double bonds into each ionone ring of beta-carotene to produce isorenieratene. The reaction includes an intramolecular methyl transfer from position C1 to position C2 of the ring. This chain is Carotenoid phi-ring synthase, found in Streptomyces griseus.